A 1209-amino-acid chain; its full sequence is Pre-mRNA-splicing factor rse1 (1209 aa).

Belongs to the RSE1 family. Associated with the spliceosome.

The protein resides in the nucleus. In terms of biological role, involved in pre-mRNA splicing and cell cycle control. This is Pre-mRNA-splicing factor rse1 (msp-5) from Neurospora crassa (strain ATCC 24698 / 74-OR23-1A / CBS 708.71 / DSM 1257 / FGSC 987).